A 149-amino-acid polypeptide reads, in one-letter code: GATA transcription factor 15 (149 aa).

Positions methionine 1–aspartate 10 are enriched in basic and acidic residues. 2 disordered regions span residues methionine 1 to lysine 41 and arginine 76 to leucine 102. A GATA-type zinc finger spans residues serine 37–serine 91.

It belongs to the type IV zinc-finger family. Class B subfamily.

It localises to the nucleus. Transcriptional regulator that specifically binds 5'-GATA-3' or 5'-GAT-3' motifs within gene promoters. The chain is GATA transcription factor 15 (GATA15) from Arabidopsis thaliana (Mouse-ear cress).